Consider the following 210-residue polypeptide: Large ribosomal subunit protein uL4 (210 aa).

Positions 44–54 are enriched in polar residues; sequence KRQGTASTLTR. The tract at residues 44–94 is disordered; sequence KRQGTASTLTRSEVRGGGRKPYKQKGTGRARQGSIRTPLRPGGGVIFGPKP. Residues 60–71 are compositionally biased toward basic residues; the sequence is GGRKPYKQKGTG.

The protein belongs to the universal ribosomal protein uL4 family. As to quaternary structure, part of the 50S ribosomal subunit.

One of the primary rRNA binding proteins, this protein initially binds near the 5'-end of the 23S rRNA. It is important during the early stages of 50S assembly. It makes multiple contacts with different domains of the 23S rRNA in the assembled 50S subunit and ribosome. Functionally, forms part of the polypeptide exit tunnel. The sequence is that of Large ribosomal subunit protein uL4 from Prochlorococcus marinus subsp. pastoris (strain CCMP1986 / NIES-2087 / MED4).